Here is a 419-residue protein sequence, read N- to C-terminus: DNA primase DnaG (419 aa).

In terms of domain architecture, Toprim spans 174 to 260; that stretch reads DAIIVVEGRS…EVEDLEKDEV (87 aa). Mg(2+)-binding residues include Glu180, Asp222, and Asp224. The segment at 277–314 is disordered; sequence HNILSESDSKNSHKKHNGKHNNKHSNNKHQQHETKVKE. A compositionally biased stretch (basic residues) spans 288–305; the sequence is SHKKHNGKHNNKHSNNKH.

Belongs to the archaeal DnaG primase family. As to quaternary structure, forms a ternary complex with MCM helicase and DNA. Component of the archaeal exosome complex. Requires Mg(2+) as cofactor.

It carries out the reaction ssDNA + n NTP = ssDNA/pppN(pN)n-1 hybrid + (n-1) diphosphate.. In terms of biological role, RNA polymerase that catalyzes the synthesis of short RNA molecules used as primers for DNA polymerase during DNA replication. Also part of the exosome, which is a complex involved in RNA degradation. Acts as a poly(A)-binding protein that enhances the interaction between heteromeric, adenine-rich transcripts and the exosome. The polypeptide is DNA primase DnaG (Methanobrevibacter smithii (strain ATCC 35061 / DSM 861 / OCM 144 / PS)).